The chain runs to 523 residues: Ubiquitin carboxyl-terminal hydrolase 22-A (523 aa).

A UBP-type zinc finger spans residues 4–121; it reads AGCSHVNSFK…KEEQRKAWKL (118 aa). The Zn(2+) site is built by C6, H8, C46, C49, C59, C62, C67, H72, H76, H82, C95, and C98. A USP domain is found at 174-518; that stretch reads RGLINLGNTC…EGYLLFYHKQ (345 aa). Catalysis depends on C183, which acts as the Nucleophile. H477 serves as the catalytic Proton acceptor.

Belongs to the peptidase C19 family. UBP8 subfamily. As to quaternary structure, component of some SAGA transcription coactivator-HAT complexes.

It is found in the nucleus. The catalysed reaction is Thiol-dependent hydrolysis of ester, thioester, amide, peptide and isopeptide bonds formed by the C-terminal Gly of ubiquitin (a 76-residue protein attached to proteins as an intracellular targeting signal).. Histone deubiquitinating component of the transcription regulatory histone acetylation (HAT) complex SAGA. Catalyzes the deubiquitination of both histones H2A and H2B, thereby acting as a coactivator. Recruited to specific gene promoters by activators, where it is required for transcription. This Xenopus laevis (African clawed frog) protein is Ubiquitin carboxyl-terminal hydrolase 22-A (usp22-a).